The sequence spans 290 residues: MQGKIIESLAGFYYVESDGQIYQTRARGNFRKKGHKPYVGDEVDFSAKENSEGYILAIHERKNSLVRPPIVNIDQAVVIISAKEPDFNHNLLDRFLILLEHRKISPIIYLSKTDLLEDLDEFKKVQKQYQKIGYYFVYYLEDLTPLLKDKITVFMGQTGVGKTTLLNTLAPDLALETNEISDSLGRGRHTTRAVTLYNIYGGKIADTPGFSSLDYEITSSEELNAAFPELLKLSAACKFRSCTHTHEPGCAVKLALAQRKIWEKRYQTYLQILSEIENRRETYKKVLKRK.

In terms of domain architecture, CP-type G spans 62 to 213 (KNSLVRPPIV…IADTPGFSSL (152 aa)). GTP contacts are provided by residues 111–114 (SKTD) and 156–164 (GQTGVGKTT). Residues C237, C242, H244, and C250 each coordinate Zn(2+).

The protein belongs to the TRAFAC class YlqF/YawG GTPase family. RsgA subfamily. In terms of assembly, monomer. Associates with 30S ribosomal subunit, binds 16S rRNA. The cofactor is Zn(2+).

The protein localises to the cytoplasm. Functionally, one of several proteins that assist in the late maturation steps of the functional core of the 30S ribosomal subunit. Helps release RbfA from mature subunits. May play a role in the assembly of ribosomal proteins into the subunit. Circularly permuted GTPase that catalyzes slow GTP hydrolysis, GTPase activity is stimulated by the 30S ribosomal subunit. This is Small ribosomal subunit biogenesis GTPase RsgA from Streptococcus mutans serotype c (strain ATCC 700610 / UA159).